Consider the following 273-residue polypeptide: 4-hydroxy-tetrahydrodipicolinate reductase (273 aa).

NAD(+) is bound by residues 8–13 (GACGRM), E34, 102–104 (GTT), and 128–131 (APNM). H160 (proton donor/acceptor) is an active-site residue. H161 provides a ligand contact to (S)-2,3,4,5-tetrahydrodipicolinate. Catalysis depends on K164, which acts as the Proton donor. 170-171 (GT) contacts (S)-2,3,4,5-tetrahydrodipicolinate.

The protein belongs to the DapB family.

Its subcellular location is the cytoplasm. It catalyses the reaction (S)-2,3,4,5-tetrahydrodipicolinate + NAD(+) + H2O = (2S,4S)-4-hydroxy-2,3,4,5-tetrahydrodipicolinate + NADH + H(+). The enzyme catalyses (S)-2,3,4,5-tetrahydrodipicolinate + NADP(+) + H2O = (2S,4S)-4-hydroxy-2,3,4,5-tetrahydrodipicolinate + NADPH + H(+). It participates in amino-acid biosynthesis; L-lysine biosynthesis via DAP pathway; (S)-tetrahydrodipicolinate from L-aspartate: step 4/4. In terms of biological role, catalyzes the conversion of 4-hydroxy-tetrahydrodipicolinate (HTPA) to tetrahydrodipicolinate. The chain is 4-hydroxy-tetrahydrodipicolinate reductase from Methanothermobacter thermautotrophicus (strain ATCC 29096 / DSM 1053 / JCM 10044 / NBRC 100330 / Delta H) (Methanobacterium thermoautotrophicum).